The sequence spans 214 residues: Urease accessory protein UreF (214 aa).

The interval 70–95 is disordered; the sequence is AAAGEAGDAETDARTPSPAARAASRA. The span at 83-95 shows a compositional bias: low complexity; sequence RTPSPAARAASRA.

This sequence belongs to the UreF family. UreD, UreF and UreG form a complex that acts as a GTP-hydrolysis-dependent molecular chaperone, activating the urease apoprotein by helping to assemble the nickel containing metallocenter of UreC. The UreE protein probably delivers the nickel.

It localises to the cytoplasm. In terms of biological role, required for maturation of urease via the functional incorporation of the urease nickel metallocenter. This is Urease accessory protein UreF from Mycolicibacterium vanbaalenii (strain DSM 7251 / JCM 13017 / BCRC 16820 / KCTC 9966 / NRRL B-24157 / PYR-1) (Mycobacterium vanbaalenii).